A 452-amino-acid chain; its full sequence is Probable ECA polymerase (452 aa).

A run of 11 helical transmembrane segments spans residues 6–26 (FSGL…LTWF), 37–57 (VFFS…TSVL), 63–83 (VGVA…CFYG), 118–138 (VILM…NGFL), 155–175 (GVAL…VYFL), 181–201 (AWLF…MIVG), 207–227 (IIIA…ISLW), 228–248 (MLAA…LKRY), 341–361 (LVVM…GLII), 378–398 (YKAA…IVLV), and 410–430 (VFFL…FWLF).

It belongs to the WzyE family. In terms of assembly, probably part of a complex composed of WzxE, WzyE and WzzE.

The protein resides in the cell inner membrane. It functions in the pathway bacterial outer membrane biogenesis; enterobacterial common antigen biosynthesis. Probably involved in the polymerization of enterobacterial common antigen (ECA) trisaccharide repeat units. This Salmonella gallinarum (strain 287/91 / NCTC 13346) protein is Probable ECA polymerase.